The primary structure comprises 184 residues: Large ribosomal subunit protein uL5c (184 aa).

Belongs to the universal ribosomal protein uL5 family. Part of the 50S ribosomal subunit; contacts the 5S rRNA.

It is found in the plastid. It localises to the chloroplast. Functionally, binds 5S rRNA, forms part of the central protuberance of the 50S subunit. The polypeptide is Large ribosomal subunit protein uL5c (rpl5) (Zygnema circumcarinatum (Green alga)).